A 602-amino-acid chain; its full sequence is Glutaminase liver isoform, mitochondrial (602 aa).

The N-terminal 14 residues, 1–14, are a transit peptide targeting the mitochondrion; the sequence is MRSMRALQNALSRA. 2 disordered regions span residues 1–28 and 46–67; these read MRSM…HPSR and QGRG…SNSG. Ser219 provides a ligand contact to substrate. An N6-succinyllysine modification is found at Lys253. Asn268 is a binding site for substrate. An N6-acetyllysine mark is found at Lys279 and Lys284. Residues Glu314 and Asn321 each contribute to the substrate site. An N6-acetyllysine modification is found at Lys329. Residues Tyr347, Tyr399, and Val417 each contribute to the substrate site. 2 ANK repeats span residues 518-551 and 552-585; these read DSRT…VKDR and WGNI…SETQ.

This sequence belongs to the glutaminase family. In terms of assembly, homotetramer, dimer of dimers. Does not assemble into higher oligomers. Interacts with the PDZ domain of the syntrophin SNTA1. Interacts with the PDZ domain of TAX1BP3. In terms of tissue distribution, liver specific.

The protein resides in the mitochondrion. The enzyme catalyses L-glutamine + H2O = L-glutamate + NH4(+). Plays an important role in the regulation of glutamine catabolism. Promotes mitochondrial respiration and increases ATP generation in cells by catalyzing the synthesis of glutamate and alpha-ketoglutarate. Increases cellular anti-oxidant function via NADH and glutathione production. May play a role in preventing tumor proliferation. This chain is Glutaminase liver isoform, mitochondrial (Gls2), found in Rattus norvegicus (Rat).